The chain runs to 299 residues: Urease accessory protein UreD (299 aa).

It belongs to the UreD family. UreD, UreF and UreG form a complex that acts as a GTP-hydrolysis-dependent molecular chaperone, activating the urease apoprotein by helping to assemble the nickel containing metallocenter of UreC. The UreE protein probably delivers the nickel.

The protein localises to the cytoplasm. In terms of biological role, required for maturation of urease via the functional incorporation of the urease nickel metallocenter. The chain is Urease accessory protein UreD from Prochlorococcus marinus (strain MIT 9303).